A 521-amino-acid polypeptide reads, in one-letter code: Bifunctional purine biosynthesis protein PurH (521 aa).

The region spanning 1-147 (MAKITRALIS…KNNADVTVVV (147 aa)) is the MGS-like domain.

Belongs to the PurH family.

The catalysed reaction is (6R)-10-formyltetrahydrofolate + 5-amino-1-(5-phospho-beta-D-ribosyl)imidazole-4-carboxamide = 5-formamido-1-(5-phospho-D-ribosyl)imidazole-4-carboxamide + (6S)-5,6,7,8-tetrahydrofolate. It carries out the reaction IMP + H2O = 5-formamido-1-(5-phospho-D-ribosyl)imidazole-4-carboxamide. It participates in purine metabolism; IMP biosynthesis via de novo pathway; 5-formamido-1-(5-phospho-D-ribosyl)imidazole-4-carboxamide from 5-amino-1-(5-phospho-D-ribosyl)imidazole-4-carboxamide (10-formyl THF route): step 1/1. Its pathway is purine metabolism; IMP biosynthesis via de novo pathway; IMP from 5-formamido-1-(5-phospho-D-ribosyl)imidazole-4-carboxamide: step 1/1. The polypeptide is Bifunctional purine biosynthesis protein PurH (Geobacter metallireducens (strain ATCC 53774 / DSM 7210 / GS-15)).